The chain runs to 279 residues: Vomeronasal type-1 receptor A8 (279 aa).

Residues 1–19 (MNKDHTLYCSVYIRNAFFS) are Extracellular-facing. A helical transmembrane segment spans residues 20–40 (EIGIGISANSCLLLFHTFMFI). Over 41–49 (RGHRPRLTD) the chain is Cytoplasmic. Residues 50-70 (LPIGFVALIHLVMLLLAAYIT) form a helical membrane-spanning segment. At 71–93 (EDFFMSSGGWDDITCKLVIFLHR) the chain is on the extracellular side. C85 and C172 are joined by a disulfide. The chain crosses the membrane as a helical span at residues 94-114 (FFRSLSVCATCLLSVFQAIIL). At 115 to 134 (CPQSSHLAKLKQNSPHQLSY) the chain is on the cytoplasmic side. Residues 135 to 155 (FFIFLSIFYTSISSQILIAAI) form a helical membrane-spanning segment. At 156 to 159 (PTQN) the chain is on the extracellular side. N159 carries an N-linked (GlcNAc...) asparagine glycan. The helical transmembrane segment at 160 to 180 (ITFVNLIYITNSCSFLPLSSS) threads the bilayer. Residues 181 to 187 (MQHTFST) lie on the Cytoplasmic side of the membrane. Residues 188–208 (LLTFRNVFVIGLMGLSTCYMA) form a helical membrane-spanning segment. The Extracellular segment spans residues 209 to 238 (TLLCRHKTRSQRLQNSKLSPKATPEQRALR). The helical transmembrane segment at 239–259 (TILMLMSFFLLMSTFDSIISY) threads the bilayer. The Cytoplasmic segment spans residues 260–279 (SRTIITGKSTALLCPDSCRS).

This sequence belongs to the G-protein coupled receptor 1 family. Expressed in a subset of sensory neurons located in the apical layer of the vomeronasal organ.

The protein localises to the cell membrane. Its function is as follows. Putative pheromone receptor implicated in the regulation of social and reproductive behavior. The polypeptide is Vomeronasal type-1 receptor A8 (Mus musculus (Mouse)).